A 111-amino-acid chain; its full sequence is uncharacterized protein (111 aa).

The next 2 membrane-spanning stretches (helical) occupy residues 7–29 (LYSS…RALY) and 49–71 (PSLL…SINL).

Its subcellular location is the membrane. This is an uncharacterized protein from Saccharomyces cerevisiae (strain ATCC 204508 / S288c) (Baker's yeast).